The following is a 294-amino-acid chain: S-adenosylmethionine uptake transporter (294 aa).

10 consecutive transmembrane segments (helical) span residues 4-24 (ALKT…TSSI), 41-61 (VAFF…VYYG), 74-91 (VLRG…TYGL), 98-118 (TATV…VFIL), 121-141 (NIIW…VVML), 148-168 (FNPE…LDII), 178-198 (MLSM…PVAM), 207-227 (FELA…FFLL), 237-257 (ATAP…YFIF), and 260-280 (FPDK…LFII). 2 consecutive EamA domains span residues 22-141 (SSIN…VVML) and 160-280 (ISFA…LFII).

This sequence belongs to the drug/metabolite transporter (DMT) superfamily. 10 TMS drug/metabolite exporter (DME) (TC 2.A.7.3) family.

The protein resides in the cell inner membrane. Transport is inhibited by S-adenosylethionine and to a lesser extent by S-adenosylhomocysteine. Unlike eukaryotic transporters is not inhibited by sinfungin. Also inhibited by 2.4-dinitrophenol, suggesting transport is an energy-dependent process. Transports S-adenosylmethionine. In Rickettsia prowazekii (strain Madrid E), this protein is S-adenosylmethionine uptake transporter (sam).